Reading from the N-terminus, the 429-residue chain is MPSIEDELFPSTPGKFKIDRSNRQLHRCFASTSTMFLWALFLIALTASYLSFQSFVDSGSRYLTASWGGIQWEKQVRTSAQIHRSGGISVLVTGATGFVGSHVSLALRKRGDGVVGLDNFNNYYDPSLKRARRSLLSSRGIFVVEGDLNDAKLLAKLFDVVAFTHVMHLAAQAGVRYALENPQSYVHSNIAGLVNLLEICKAANPQPAIVWASSSSVYGLNEKVPFSESDRTDQPASLYAATKKAGEEITHTYNHIYGLAITGLRFFTVYGPWGRPDMAYFSFTRNILQGKPITIYRGKNRVDLARDFTYIDDIVKGCLGSLDSSGKSTGSGGKKRGAAPYRIFNLGNTSPVTVPILVDILEKHLKVKAKRNFVEMPGNGDVPFTHANISSARNEFGYKPTTDLETGLKKFVRWYLSYYGYNTKAKLVH.

The next 2 helical transmembrane spans lie at 36-56 (FLWALFLIALTASYLSFQSFV) and 87-107 (GISVLVTGATGFVGSHVSLAL). 89-120 (SVLVTGATGFVGSHVSLALRKRGDGVVGLDNF) lines the NAD(+) pocket. Tyr-239 acts as the Proton acceptor in catalysis.

The protein belongs to the NAD(P)-dependent epimerase/dehydratase family. As to quaternary structure, homodimer. As to expression, in root stele, leaves, siliques, flowers, pollen and stems.

It is found in the golgi apparatus. The protein localises to the golgi stack membrane. The catalysed reaction is UDP-alpha-D-glucuronate = UDP-alpha-D-galacturonate. Its activity is regulated as follows. Inhibited by UDP-Xylose. Functionally, UDP-D-glucuronate 4-epimerase involved in the synthesis of the negatively charged monosaccharide that forms the backbone of pectic cell wall components. The protein is UDP-glucuronate 4-epimerase 1 (GAE1) of Arabidopsis thaliana (Mouse-ear cress).